The sequence spans 156 residues: MPRRRVIGQRKILPDPKFGSELLAKFVNILMVDGKKSTAETIVYNALETLAQRSGKNELEAFEVALDNVRPTVEVKSRRVGGSTYQVPVEVRPVRRNALAMRWIVEAARKRGDKSMALRLANELSDAAENKGTAVKKREDVHRMAEANKAFAHYRW.

The protein belongs to the universal ribosomal protein uS7 family. In terms of assembly, part of the 30S ribosomal subunit. Contacts proteins S9 and S11.

Its function is as follows. One of the primary rRNA binding proteins, it binds directly to 16S rRNA where it nucleates assembly of the head domain of the 30S subunit. Is located at the subunit interface close to the decoding center, probably blocks exit of the E-site tRNA. The protein is Small ribosomal subunit protein uS7 of Erwinia tasmaniensis (strain DSM 17950 / CFBP 7177 / CIP 109463 / NCPPB 4357 / Et1/99).